We begin with the raw amino-acid sequence, 510 residues long: UDP-N-acetylmuramoylalanine--D-glutamate ligase (510 aa).

138-144 (GTNGKTT) is an ATP binding site. The interval 294–316 (FDEPAPAPRRKKDAPPPTRAGGR) is disordered.

Belongs to the MurCDEF family.

It is found in the cytoplasm. The enzyme catalyses UDP-N-acetyl-alpha-D-muramoyl-L-alanine + D-glutamate + ATP = UDP-N-acetyl-alpha-D-muramoyl-L-alanyl-D-glutamate + ADP + phosphate + H(+). It functions in the pathway cell wall biogenesis; peptidoglycan biosynthesis. Cell wall formation. Catalyzes the addition of glutamate to the nucleotide precursor UDP-N-acetylmuramoyl-L-alanine (UMA). The chain is UDP-N-acetylmuramoylalanine--D-glutamate ligase from Bordetella bronchiseptica (strain ATCC BAA-588 / NCTC 13252 / RB50) (Alcaligenes bronchisepticus).